Reading from the N-terminus, the 161-residue chain is Allophycocyanin subunit alpha 1 (161 aa).

Position 71 is an N4-methylasparagine (asparagine 71). (2R,3E)-phycocyanobilin is bound at residue cysteine 81.

It belongs to the phycobiliprotein family. As to quaternary structure, heterohexamer of two alpha chains, one alpha-B chain and three beta chains. Contains one covalently linked phycocyanobilin chromophore. The chromophore is added by phycocyanobilin lyase CpcS 1.

The protein resides in the cellular thylakoid membrane. In terms of biological role, light-harvesting photosynthetic bile pigment-protein from the phycobiliprotein complex. Allophycocyanin has a maximum absorption at approximately 650 to 653 nanometers. In Nostoc sp. (strain PCC 7120 / SAG 25.82 / UTEX 2576), this protein is Allophycocyanin subunit alpha 1 (apcA1).